Consider the following 567-residue polypeptide: 2-succinyl-5-enolpyruvyl-6-hydroxy-3-cyclohexene-1-carboxylate synthase (567 aa).

The protein belongs to the TPP enzyme family. MenD subfamily. Homodimer. Mg(2+) is required as a cofactor. The cofactor is Mn(2+). Thiamine diphosphate serves as cofactor.

It carries out the reaction isochorismate + 2-oxoglutarate + H(+) = 5-enolpyruvoyl-6-hydroxy-2-succinyl-cyclohex-3-ene-1-carboxylate + CO2. It functions in the pathway quinol/quinone metabolism; 1,4-dihydroxy-2-naphthoate biosynthesis; 1,4-dihydroxy-2-naphthoate from chorismate: step 2/7. The protein operates within quinol/quinone metabolism; menaquinone biosynthesis. Catalyzes the thiamine diphosphate-dependent decarboxylation of 2-oxoglutarate and the subsequent addition of the resulting succinic semialdehyde-thiamine pyrophosphate anion to isochorismate to yield 2-succinyl-5-enolpyruvyl-6-hydroxy-3-cyclohexene-1-carboxylate (SEPHCHC). The protein is 2-succinyl-5-enolpyruvyl-6-hydroxy-3-cyclohexene-1-carboxylate synthase of Yersinia pestis bv. Antiqua (strain Angola).